The chain runs to 424 residues: Zinc finger protein 597 (424 aa).

The 75-residue stretch at 14-88 folds into the KRAB domain; it reads ILFEDLAVYF…KYPIAAPLVP (75 aa). 4 C2H2-type zinc fingers span residues 156–178, 184–206, 212–234, and 240–262; these read YKCP…QKIH, HKCG…RRIH, YKCA…MNSH, and YTCS…QKSH. Residue Lys300 forms a Glycyl lysine isopeptide (Lys-Gly) (interchain with G-Cter in SUMO2) linkage. C2H2-type zinc fingers lie at residues 341-363, 369-391, and 397-419; these read LQCP…QNIH, HKCK…QKSH, and FKCT…KRTH.

The protein belongs to the krueppel C2H2-type zinc-finger protein family.

The protein resides in the nucleus. May be involved in transcriptional regulation. This is Zinc finger protein 597 (ZNF597) from Homo sapiens (Human).